Here is a 261-residue protein sequence, read N- to C-terminus: 5'-nucleotidase SurE (261 aa).

A divalent metal cation is bound by residues D18, D19, S50, and N102.

It belongs to the SurE nucleotidase family. It depends on a divalent metal cation as a cofactor.

The protein resides in the cytoplasm. The enzyme catalyses a ribonucleoside 5'-phosphate + H2O = a ribonucleoside + phosphate. Functionally, nucleotidase that shows phosphatase activity on nucleoside 5'-monophosphates. In Rhodospirillum rubrum (strain ATCC 11170 / ATH 1.1.1 / DSM 467 / LMG 4362 / NCIMB 8255 / S1), this protein is 5'-nucleotidase SurE.